The chain runs to 163 residues: NADH-quinone oxidoreductase subunit I (163 aa).

2 4Fe-4S ferredoxin-type domains span residues 53–83 (LRRY…IEAG) and 94–123 (VRYD…EGPN). Residues cysteine 63, cysteine 66, cysteine 69, cysteine 73, cysteine 103, cysteine 106, cysteine 109, and cysteine 113 each coordinate [4Fe-4S] cluster.

The protein belongs to the complex I 23 kDa subunit family. As to quaternary structure, NDH-1 is composed of 14 different subunits. Subunits NuoA, H, J, K, L, M, N constitute the membrane sector of the complex. [4Fe-4S] cluster serves as cofactor.

The protein resides in the cell inner membrane. It carries out the reaction a quinone + NADH + 5 H(+)(in) = a quinol + NAD(+) + 4 H(+)(out). NDH-1 shuttles electrons from NADH, via FMN and iron-sulfur (Fe-S) centers, to quinones in the respiratory chain. The immediate electron acceptor for the enzyme in this species is believed to be ubiquinone. Couples the redox reaction to proton translocation (for every two electrons transferred, four hydrogen ions are translocated across the cytoplasmic membrane), and thus conserves the redox energy in a proton gradient. The chain is NADH-quinone oxidoreductase subunit I from Allorhizobium ampelinum (strain ATCC BAA-846 / DSM 112012 / S4) (Agrobacterium vitis (strain S4)).